A 416-amino-acid chain; its full sequence is CBL-interacting serine/threonine-protein kinase 21 (416 aa).

The Protein kinase domain occupies 12–264; sequence YEIGRTIGEG…AEIIIKDSWF (253 aa). ATP contacts are provided by residues 18-26 and lysine 41; that span reads IGEGNFAKV. Aspartate 134 (proton acceptor) is an active-site residue. An activation loop region spans residues 152–178; the sequence is DFGLSAVPKSGDMLSTACGSPCYIAPE. Phosphoserine is present on serine 156. Threonine 167 bears the Phosphothreonine mark. The 25-residue stretch at 291–315 folds into the NAF domain; sequence ASSNFINAFQIIAMSSDLDLSGLFE. Residues 321 to 351 form a PPI region; it reads RYKTRIGSKNTAQETIKKIEAAATYVSLSVE.

The protein belongs to the protein kinase superfamily. CAMK Ser/Thr protein kinase family. SNF1 subfamily. Interacts with CBL9. Mn(2+) is required as a cofactor.

The catalysed reaction is L-seryl-[protein] + ATP = O-phospho-L-seryl-[protein] + ADP + H(+). It catalyses the reaction L-threonyl-[protein] + ATP = O-phospho-L-threonyl-[protein] + ADP + H(+). Its function is as follows. CIPK serine-threonine protein kinases interact with CBL proteins. Binding of a CBL protein to the regulatory NAF domain of CIPK protein lead to the activation of the kinase in a calcium-dependent manner. The protein is CBL-interacting serine/threonine-protein kinase 21 (CIPK21) of Arabidopsis thaliana (Mouse-ear cress).